The sequence spans 447 residues: Tubulin beta chain (447 aa).

8 residues coordinate GTP: Gln-11, Glu-69, Ser-138, Gly-142, Thr-143, Gly-144, Asn-204, and Asn-226. Glu-69 contacts Mg(2+). The segment at 424-447 is disordered; sequence QYQDAGVDEEEEEYEEEAPLEGEE. Acidic residues predominate over residues 429–447; that stretch reads GVDEEEEEYEEEAPLEGEE.

Belongs to the tubulin family. Dimer of alpha and beta chains. A typical microtubule is a hollow water-filled tube with an outer diameter of 25 nm and an inner diameter of 15 nM. Alpha-beta heterodimers associate head-to-tail to form protofilaments running lengthwise along the microtubule wall with the beta-tubulin subunit facing the microtubule plus end conferring a structural polarity. Microtubules usually have 13 protofilaments but different protofilament numbers can be found in some organisms and specialized cells. It depends on Mg(2+) as a cofactor.

The protein resides in the cytoplasm. It localises to the cytoskeleton. Its function is as follows. Tubulin is the major constituent of microtubules, a cylinder consisting of laterally associated linear protofilaments composed of alpha- and beta-tubulin heterodimers. Microtubules grow by the addition of GTP-tubulin dimers to the microtubule end, where a stabilizing cap forms. Below the cap, tubulin dimers are in GDP-bound state, owing to GTPase activity of alpha-tubulin. This chain is Tubulin beta chain (tub-2), found in Neurospora crassa (strain ATCC 24698 / 74-OR23-1A / CBS 708.71 / DSM 1257 / FGSC 987).